Reading from the N-terminus, the 135-residue chain is Histone H3 type 2 (135 aa).

The segment at 1–40 (MARTKQTARKSTGGKAPRKQLATKAARKTPATGGVKKPHR) is disordered. K5 carries the N6-methyllysine modification. At K10 the chain carries N6-acetyllysine; alternate. K10 is subject to N6-methyllysine; alternate. A Phosphoserine modification is found at S11. Phosphothreonine is present on T12. N6-acetyllysine occurs at positions 15, 19, and 24. An N6-acetyllysine; alternate modification is found at K28. K28 carries the post-translational modification N6-methyllysine; alternate. 2 positions are modified to N6-methyllysine: K36 and K37.

The protein belongs to the histone H3 family. As to quaternary structure, the nucleosome is a histone octamer containing two molecules each of H2A, H2B, H3 and H4 assembled in one H3-H4 heterotetramer and two H2A-H2B heterodimers. The octamer wraps approximately 147 bp of DNA. Post-translationally, acetylation is generally linked to gene activation. Acetylated to form H3K9ac (11%), H3K14ac (17%), H3K18ac (11%), H3K23ac (16%) and H3K27ac (7%). H3K4, H3K35 and H3K36 are not acetylated. H3K4me prevents acetylation. 32% of the histone H3 are acetylated with, on average, 2.4 acetyl-Lys. They are all continuously deacatylated and re-acetylated with a half-life of approximately 2 minutes. In terms of processing, monomethylated to form H3K4me1 (81%), H3K9me1 (16%), H3K27me1 (25%), H3K35me1 (25%) and H3K36me1 (5%). No methylation at H3K14, H3K18 and H3K23. Methylated by a protein complex that includes Mut11. Set1 methylates specifically H3K4. H3K4me1 is associated with silenced euchromatin. Set3 forms H3K9me1, while H3K9me2 is undetected. H3K9me1 is specifically associated with silent, multi-copy transgenes. No phosphorylation detected.

The protein localises to the nucleus. The protein resides in the chromosome. Functionally, core component of nucleosome. Nucleosomes wrap and compact DNA into chromatin, limiting DNA accessibility to the cellular machineries which require DNA as a template. Histones thereby play a central role in transcription regulation, DNA repair, DNA replication and chromosomal stability. DNA accessibility is regulated via a complex set of post-translational modifications of histones, also called histone code, and nucleosome remodeling. The sequence is that of Histone H3 type 2 (ch3-II) from Chlamydomonas reinhardtii (Chlamydomonas smithii).